The sequence spans 170 residues: Fluoride-specific ion channel FluC 2 (170 aa).

4 helical membrane passes run 8 to 28 (ALVF…TVWI), 55 to 75 (IALL…VGMI), 84 to 104 (TFWG…AAAV), and 114 to 134 (ILIG…AAAM). 2 residues coordinate Na(+): Gly92 and Thr95.

It belongs to the fluoride channel Fluc/FEX (TC 1.A.43) family.

The protein resides in the cell membrane. It catalyses the reaction fluoride(in) = fluoride(out). With respect to regulation, na(+) is not transported, but it plays an essential structural role and its presence is essential for fluoride channel function. Fluoride-specific ion channel. Important for reducing fluoride concentration in the cell, thus reducing its toxicity. This chain is Fluoride-specific ion channel FluC 2, found in Corynebacterium jeikeium (strain K411).